A 342-amino-acid polypeptide reads, in one-letter code: Transmembrane protein HWLF3 (342 aa).

Residues 21-64 (PCSTSCPPSPAAPTLLRRRSLPQQRRRPSSSPNRRVRGVTTSPC) are disordered. Positions 36-48 (LRRRSLPQQRRRP) are enriched in basic residues. The chain crosses the membrane as a helical span at residues 119–139 (AIFIFQLAFSFGLGSVFWLGF). Asn-149 carries an N-linked (GlcNAc...) asparagine; by host glycan. The chain crosses the membrane as a helical span at residues 150–170 (YSFFLTVLVPIVCMFITYTLG). An N-linked (GlcNAc...) asparagine; by host glycan is attached at Asn-176. A run of 5 helical transmembrane segments spans residues 177 to 197 (ATVL…FQMC), 202 to 222 (VLVG…GLAF), 231 to 251 (WKCI…LALL), 266 to 286 (AFSI…VIFF), and 296 to 316 (AVCL…MLSG). A glycan (N-linked (GlcNAc...) asparagine; by host) is linked at Asn-330.

This sequence belongs to the cytomegalovirus US12 family.

The protein localises to the membrane. This Human cytomegalovirus (strain Towne) (HHV-5) protein is Transmembrane protein HWLF3 (US20).